Consider the following 896-residue polypeptide: DNA double-strand break repair Rad50 ATPase (896 aa).

ATP-binding positions include 32–38 (NGAGKSS) and Q137. Coiled coils occupy residues 200-274 (RRYQ…KLQE), 412-505 (EEIR…LISM), 580-611 (IGDIEALRKQKDEVSKKLKDAEDRTHEIESEF), 636-669 (IKLAEDLKRQRETLREKVKDLRSRSAGMDEIQKR), and 702-731 (RSKVETLRSHVSEIEQRISDRERDIERMKK). Positions 411 to 507 (YEEIRRDIDE…KKRQLISMES (97 aa)) constitute a Zinc-hook domain. Residues C455 and C458 each contribute to the Zn(2+) site.

The protein belongs to the SMC family. RAD50 subfamily. Homodimer. Forms a heterotetramer composed of two Mre11 subunits and two Rad50 subunits. Zn(2+) serves as cofactor.

Part of the Rad50/Mre11 complex, which is involved in the early steps of DNA double-strand break (DSB) repair. The complex may facilitate opening of the processed DNA ends to aid in the recruitment of HerA and NurA. Rad50 controls the balance between DNA end bridging and DNA resection via ATP-dependent structural rearrangements of the Rad50/Mre11 complex. In Thermoplasma acidophilum (strain ATCC 25905 / DSM 1728 / JCM 9062 / NBRC 15155 / AMRC-C165), this protein is DNA double-strand break repair Rad50 ATPase.